Consider the following 89-residue polypeptide: FXYD domain-containing ion transport regulator 4 (89 aa).

Residues 1-20 (MERVTLALLLLAGLTALEAN) form the signal peptide. Residues 21–38 (DPFANKDDPFYYDWKNLQ) lie on the Extracellular side of the membrane. Residues 39-59 (LSGLICGGLLAIAGIAAVLSG) form a helical membrane-spanning segment. Residues 60–89 (KCKCKSSQKQHSPVPEKAIPLITPGSATTC) lie on the Cytoplasmic side of the membrane.

Belongs to the FXYD family. As to quaternary structure, regulatory subunit of the sodium/potassium-transporting ATPase which is composed of a catalytic alpha subunit, a non-catalytic beta subunit and a regulatory subunit. The regulatory subunit, a member of the FXYD protein family, modulates the enzymatic activity in a tissue- and isoform-specific way by changing affinities of the Na+/K+-ATPase toward Na(+), K(+) or ATP.

It localises to the cell membrane. It is found in the basolateral cell membrane. Its function is as follows. Associates with and regulates the activity of the sodium/potassium-transporting ATPase (NKA) which catalyzes the hydrolysis of ATP coupled with the exchange of Na(+) and K(+) ions across the plasma membrane. Increases the apparent affinity of the transporter for Na(+) and increases NKA activity. This Homo sapiens (Human) protein is FXYD domain-containing ion transport regulator 4 (FXYD4).